The chain runs to 238 residues: Ribosomal RNA small subunit methyltransferase G (238 aa).

S-adenosyl-L-methionine contacts are provided by residues G77, F82, A128 to E129, and R147.

The protein belongs to the methyltransferase superfamily. RNA methyltransferase RsmG family.

It is found in the cytoplasm. In terms of biological role, specifically methylates the N7 position of guanine in position 535 of 16S rRNA. In Listeria monocytogenes serotype 4b (strain F2365), this protein is Ribosomal RNA small subunit methyltransferase G.